We begin with the raw amino-acid sequence, 171 residues long: Ribosome maturation factor RimM (171 aa).

One can recognise a PRC barrel domain in the interval 97–170 (EGEYYYHEII…LVTIHVMEGL (74 aa)).

The protein belongs to the RimM family. As to quaternary structure, binds ribosomal protein uS19.

Its subcellular location is the cytoplasm. In terms of biological role, an accessory protein needed during the final step in the assembly of 30S ribosomal subunit, possibly for assembly of the head region. Essential for efficient processing of 16S rRNA. May be needed both before and after RbfA during the maturation of 16S rRNA. It has affinity for free ribosomal 30S subunits but not for 70S ribosomes. This Bacillus thuringiensis (strain Al Hakam) protein is Ribosome maturation factor RimM.